The chain runs to 346 residues: Biotin synthase (346 aa).

The 219-residue stretch at 38 to 256 (QQVQVSTLLS…IAVARIMMPT (219 aa)) folds into the Radical SAM core domain. Positions 53, 57, and 60 each coordinate [4Fe-4S] cluster. The [2Fe-2S] cluster site is built by Cys-97, Cys-128, Cys-188, and Arg-260.

The protein belongs to the radical SAM superfamily. Biotin synthase family. As to quaternary structure, homodimer. [4Fe-4S] cluster serves as cofactor. [2Fe-2S] cluster is required as a cofactor.

The catalysed reaction is (4R,5S)-dethiobiotin + (sulfur carrier)-SH + 2 reduced [2Fe-2S]-[ferredoxin] + 2 S-adenosyl-L-methionine = (sulfur carrier)-H + biotin + 2 5'-deoxyadenosine + 2 L-methionine + 2 oxidized [2Fe-2S]-[ferredoxin]. It participates in cofactor biosynthesis; biotin biosynthesis; biotin from 7,8-diaminononanoate: step 2/2. Its function is as follows. Catalyzes the conversion of dethiobiotin (DTB) to biotin by the insertion of a sulfur atom into dethiobiotin via a radical-based mechanism. The protein is Biotin synthase of Salmonella dublin (strain CT_02021853).